The primary structure comprises 266 residues: 4-diphosphocytidyl-2-C-methyl-D-erythritol kinase (266 aa).

The active site involves Lys11. 103–113 (PTFAGLGGGSS) serves as a coordination point for ATP. Residue Asp145 is part of the active site.

It belongs to the GHMP kinase family. IspE subfamily.

The enzyme catalyses 4-CDP-2-C-methyl-D-erythritol + ATP = 4-CDP-2-C-methyl-D-erythritol 2-phosphate + ADP + H(+). Its pathway is isoprenoid biosynthesis; isopentenyl diphosphate biosynthesis via DXP pathway; isopentenyl diphosphate from 1-deoxy-D-xylulose 5-phosphate: step 3/6. Its function is as follows. Catalyzes the phosphorylation of the position 2 hydroxy group of 4-diphosphocytidyl-2C-methyl-D-erythritol. The polypeptide is 4-diphosphocytidyl-2-C-methyl-D-erythritol kinase (Sulfurimonas denitrificans (strain ATCC 33889 / DSM 1251) (Thiomicrospira denitrificans (strain ATCC 33889 / DSM 1251))).